Reading from the N-terminus, the 404-residue chain is Starvation-sensing protein RspA (404 aa).

This sequence belongs to the mandelate racemase/muconate lactonizing enzyme family.

Its function is as follows. Probably involved in the degradation of homoserine lactone (HSL) or of a metabolite of HSL that signals starvation. This chain is Starvation-sensing protein RspA, found in Escherichia coli (strain K12).